A 465-amino-acid chain; its full sequence is MLLVWSLALLLGAVAGKEVCYDRLGCFSDDSPWSGIVERPLKVLPWSPADVNTRFLLYTNENQDNYQQITADSSRIQSSNFKTNRKTRFIIHGFIDKGEESWLANMCKKMFQVESVNCICVDWKGGSRTGYTQASQNIRIVGAEVAYFVDFLRTQLGYSPSNVHVIGHSLGSHAAGEAGRRTNGAIGRITGLDPAEPCFEGTPELVRLDPSDAQFVDAIHTDGAPIVPNLGFGMSQTVGHLDFFPNGGIEMPGCQKNILSQIVDIDGIWEGTRDFAACNHLRSYKYYTDSIVNPTGFAAFSCASYSVFSANKCFPCPSGGCPQMGHYADRYSGKTNGVGQKFYLNTGDKSNFSRWRYKVSVTLSGQKVTGHILVSLFGNAGNSKQYEIYKGSLHPGYTHSNEFDSDVDVGDLQRVKFIWYNNVINPSLPRVGASSISVERNDGRVFKFCSAETVREDVLLTLNAC.

The first 16 residues, 1–16 (MLLVWSLALLLGAVAG), serve as a signal peptide directing secretion. Disulfide bonds link Cys20-Cys26 and Cys107-Cys118. Ser169 functions as the Nucleophile in the catalytic mechanism. The active-site Charge relay system is the Asp193. Ca(2+)-binding residues include Glu204, Arg207, Asp209, and Asp212. The cysteines at positions 254 and 278 are disulfide-linked. His280 serves as the catalytic Charge relay system. Cystine bridges form between Cys302-Cys313, Cys316-Cys321, and Cys449-Cys465. The PLAT domain occupies 355–465 (WRYKVSVTLS…EDVLLTLNAC (111 aa)).

Belongs to the AB hydrolase superfamily. Lipase family. Forms a 1:1 stoichiometric complex with (pro)colipase/CLPS. In terms of tissue distribution, expressed in many tissues with highest expression in liver. During hibernation there is a significant increases in expression in heart, white adipose tissue (WAT), and testis; but not in pancreas.

The protein resides in the secreted. It catalyses the reaction a triacylglycerol + H2O = a diacylglycerol + a fatty acid + H(+). It carries out the reaction 1,2,3-tributanoylglycerol + H2O = dibutanoylglycerol + butanoate + H(+). The catalysed reaction is 1,2,3-tri-(9Z-octadecenoyl)-glycerol + H2O = di-(9Z)-octadecenoylglycerol + (9Z)-octadecenoate + H(+). The enzyme catalyses all-trans-retinyl hexadecanoate + H2O = all-trans-retinol + hexadecanoate + H(+). It catalyses the reaction 1,2-di-(9Z-octadecenoyl)-glycerol + H2O = (9Z-octadecenoyl)-glycerol + (9Z)-octadecenoate + H(+). Inhibited by bile salts, is reactivated by (pro)colipase/CLPS. Its function is as follows. Plays an important role in fat metabolism. It preferentially splits the esters of long-chain fatty acids at positions 1 and 3, producing mainly 2-monoacylglycerol and free fatty acids, and shows considerably higher activity against insoluble emulsified substrates than against soluble ones. Plays a role in hibernation as a key enzyme that shows high activity at low temperatures. When expressed in the hibernating heart it liberates fatty acids from triglycerides at temperatures as low as 0 degrees Celsius. The protein is Pancreatic triacylglycerol lipase (PNLIP) of Ictidomys tridecemlineatus (Thirteen-lined ground squirrel).